Reading from the N-terminus, the 119-residue chain is Beta-2-microglobulin (119 aa).

The signal sequence occupies residues 1–20 (MARLVVVALLVLLCLSGLEA). One can recognise an Ig-like C1-type domain in the interval 25 to 114 (PKIQVYSRHP…VTFTAPKTVK (90 aa)). Cys-45 and Cys-100 are oxidised to a cystine.

It belongs to the beta-2-microglobulin family. Heterodimer of an alpha chain and a beta chain. Beta-2-microglobulin is the beta-chain of major histocompatibility complex class I molecules.

It localises to the secreted. Functionally, component of the class I major histocompatibility complex (MHC). Involved in the presentation of peptide antigens to the immune system. This is Beta-2-microglobulin (B2M) from Chiropotes satanas (Brown-bearded saki).